We begin with the raw amino-acid sequence, 131 residues long: Outer membrane protein assembly factor BamE (131 aa).

Positions 1 to 16 are cleaved as a signal peptide; it reads MRNLLLVAAVALSTAG. A lipid anchor (N-palmitoyl cysteine) is attached at C17. Residue C17 is the site of S-diacylglycerol cysteine attachment. Positions 112 to 131 are disordered; that stretch reads SAPKQFGRNLARDKKKQRGR.

It belongs to the BamE family. Part of the Bam complex.

The protein localises to the cell outer membrane. In terms of biological role, part of the outer membrane protein assembly complex, which is involved in assembly and insertion of beta-barrel proteins into the outer membrane. The chain is Outer membrane protein assembly factor BamE from Xanthomonas campestris pv. campestris (strain ATCC 33913 / DSM 3586 / NCPPB 528 / LMG 568 / P 25).